A 326-amino-acid polypeptide reads, in one-letter code: Flavanone 3-dioxygenase 3 (326 aa).

Polar residues predominate over residues 1–15; sequence MSDTSKGIPQEQLPS. The tract at residues 1–21 is disordered; that stretch reads MSDTSKGIPQEQLPSQELHPP. In terms of domain architecture, Fe2OG dioxygenase spans 175 to 276; that stretch reads EGLQLLSVNC…RISLASIHGF (102 aa). 3 residues coordinate Fe cation: histidine 200, aspartate 202, and histidine 257. Position 267 (arginine 267) interacts with 2-oxoglutarate.

This sequence belongs to the iron/ascorbate-dependent oxidoreductase family. Fe(2+) serves as cofactor. It depends on L-ascorbate as a cofactor. Expressed at very low levels in roots, leaves, stems and seeds.

It carries out the reaction a (2S)-flavan-4-one + 2-oxoglutarate + O2 = a (2R,3R)-dihydroflavonol + succinate + CO2. It functions in the pathway secondary metabolite biosynthesis; flavonoid biosynthesis. Functionally, catalyzes the 3-beta-hydroxylation of 2S-flavanones to 2R,3R-dihydroflavonols which are intermediates in the biosynthesis of flavonols, anthocyanidins, catechins and proanthocyanidins in plants. Converts (2S)-eriodictyol to (+)-taxifolin and (2S)-naringenin to (+)-(2R/3R)-dihydrokaempferol in vitro. This Oryza sativa subsp. japonica (Rice) protein is Flavanone 3-dioxygenase 3.